A 1085-amino-acid chain; its full sequence is SLIT-ROBO Rho GTPase-activating protein 1 (1085 aa).

An F-BAR domain is found at serine 19–aspartate 314. A coiled-coil region spans residues valine 351–methionine 390. The residue at position 416 (serine 416) is a Phosphoserine. Positions tyrosine 475–arginine 496 are disordered. The region spanning glycine 506–phenylalanine 694 is the Rho-GAP domain. Residues cysteine 743–methionine 802 form the SH3 domain. The segment covering aspartate 808–proline 822 has biased composition (polar residues). Residues aspartate 808–aspartate 954 are disordered. A phosphoserine mark is found at serine 835 and serine 917. Over residues serine 922–aspartate 931 the composition is skewed to basic and acidic residues. Serine 932 carries the post-translational modification Phosphoserine. Positions arginine 937–glycine 946 are enriched in polar residues. Residues glutamate 956–alanine 985 adopt a coiled-coil conformation. A compositionally biased stretch (polar residues) spans lysine 997–proline 1011. 2 disordered regions span residues lysine 997 to phenylalanine 1038 and lysine 1051 to methionine 1085. Position 999 is a phosphoserine (serine 999). Position 1001 is a phosphothreonine (threonine 1001). Residues serine 1027 to threonine 1037 show a composition bias toward low complexity. Serine 1032 bears the Phosphoserine mark.

In terms of assembly, homodimer. Forms a heterooligomer with SRGAP2 and SRGAP3 through its F-BAR domain. Interacts with ROBO1, CDC42 and RHOA. Interacts with FASLG. As to expression, expressed in brain, lung, kidney, and testis.

In terms of biological role, GTPase-activating protein for RhoA and Cdc42 small GTPases. Together with CDC42 seems to be involved in the pathway mediating the repulsive signaling of Robo and Slit proteins in neuronal migration. SLIT2, probably through interaction with ROBO1, increases the interaction of SRGAP1 with ROBO1 and inactivates CDC42. In Homo sapiens (Human), this protein is SLIT-ROBO Rho GTPase-activating protein 1 (SRGAP1).